Here is a 262-residue protein sequence, read N- to C-terminus: Acetylglutamate kinase (262 aa).

Substrate-binding positions include Gly48–Gly49, Arg70, and Asn162.

It belongs to the acetylglutamate kinase family. ArgB subfamily.

Its subcellular location is the cytoplasm. The catalysed reaction is N-acetyl-L-glutamate + ATP = N-acetyl-L-glutamyl 5-phosphate + ADP. It functions in the pathway amino-acid biosynthesis; L-arginine biosynthesis; N(2)-acetyl-L-ornithine from L-glutamate: step 2/4. Its function is as follows. Catalyzes the ATP-dependent phosphorylation of N-acetyl-L-glutamate. This chain is Acetylglutamate kinase, found in Vibrio cholerae serotype O1 (strain ATCC 39541 / Classical Ogawa 395 / O395).